A 396-amino-acid chain; its full sequence is RNA binding protein fox-1 homolog 1 (396 aa).

Residues 1–119 form a disordered region; it reads MNCEREQLRG…ESKSQPKRLH (119 aa). The span at 67-86 shows a compositional bias: polar residues; sequence PPTQTHSEQSADTSAQTVSG. Positions 87–98 are enriched in low complexity; sequence TATQTDDAAPTD. Residues 99-112 are compositionally biased toward polar residues; that stretch reads GQPQTQPSENTESK. One can recognise an RRM domain in the interval 116–192; the sequence is KRLHVSNIPF…RKIEVNNATA (77 aa). Asymmetric dimethylarginine occurs at positions 316 and 337. Arg387 is subject to Omega-N-methylarginine.

As to quaternary structure, binds to the C-terminus of ATXN2. In terms of tissue distribution, detected in brain (at protein level). Detected in heart, brain, neurons, skeletal muscle and embryo.

The protein resides in the nucleus. Its subcellular location is the cytoplasm. In terms of biological role, RNA-binding protein that regulates alternative splicing events by binding to 5'-UGCAUGU-3' elements. Prevents binding of U2AF2 to the 3'-splice site. Regulates alternative splicing of tissue-specific exons and of differentially spliced exons during erythropoiesis. The sequence is that of RNA binding protein fox-1 homolog 1 (Rbfox1) from Mus musculus (Mouse).